Reading from the N-terminus, the 181-residue chain is D-lyxose/D-mannose isomerase (181 aa).

4 residues coordinate Mn(2+): histidine 75, histidine 77, glutamate 88, and histidine 143.

It belongs to the D-lyxose ketol-isomerase family. Homodimer. Mn(2+) is required as a cofactor.

It carries out the reaction D-lyxose = D-xylulose. It catalyses the reaction D-mannose = D-fructose. Its function is as follows. Sugar isomerase that catalyzes the reversible isomerization of D-lyxose to D-xylulose, and D-mannose to D-fructose. Shows optimum activity using D-lyxose as substrate, but can also effectively catalyze the isomerization between D-fructose and D-mannose. This Thermosediminibacter oceani (strain ATCC BAA-1034 / DSM 16646 / JW/IW-1228P) protein is D-lyxose/D-mannose isomerase.